The following is a 504-amino-acid chain: Cytochrome P450 monooxygenase gsfF (504 aa).

The first 16 residues, 1–16 (MTVLFILSAGLVAVFG), serve as a signal peptide directing secretion. Residues Asn97 and Asn150 are each glycosylated (N-linked (GlcNAc...) asparagine). Cys450 is a binding site for heme.

The protein belongs to the cytochrome P450 family. Requires heme as cofactor.

The enzyme catalyses griseophenone B + reduced [NADPH--hemoprotein reductase] + O2 + H(+) = desmethyl-dehydrogriseofulvin + oxidized [NADPH--hemoprotein reductase] + 2 H2O. It functions in the pathway secondary metabolite biosynthesis; terpenoid biosynthesis. Its function is as follows. Cytochrome P450 monooxygenase; part of the gene cluster that mediates the biosynthesis of griseofulvin, an important antifungal drug that has been in use for a long time for treating dermatophyte infections. The first step of the pathway is the formation of the heptaketide backbone by gsfA which is initiated by priming with acetyl-CoA, followed by sequential condensations of 6 malonyl-CoA units. The resulting benzophenone can undergo a spontaneous dehydration to form norlichexanthone. However, the true precursor for the griseofulvin biosynthesis is not norlichexanthone, but the heptaketide benzophenone that is O-methylated at 3-OH by gsfB to produce griseophenone D which is further methylated at 9-OH by gsfC to yield griseophenone C. Griseophenone C is then substrate of halogenase gsfI which is responsible for the regio-specific chlorination at the C13 position to form griseophenone B. The cytochrome P450 gsfF catalyzes the coupling of orcinol and phloroglucinol rings in griseophenone B to form desmethyl-dehydrogriseofulvin A which is further methylated at 5-OH by gsfD to yield dehydrogriseofulvin. Finally, gsfE performs stereospecific reduction of enone 18 of dehydrogriseofulvin to afford the final product griseofulvin. This is Cytochrome P450 monooxygenase gsfF from Penicillium aethiopicum.